Reading from the N-terminus, the 932-residue chain is Protocadherin gamma-A8 (932 aa).

Residues 1-29 (MAAPQSRPRRGELILLCALLGTLWEIGRG) form the signal peptide. 6 consecutive Cadherin domains span residues 30–133 (QIRY…NPKF), 134–242 (QVED…APVF), 243–347 (PHPI…RPEV), 348–452 (IITS…PPTF), 453–562 (PHAS…APEI), and 570–682 (DGST…KPSV). Topologically, residues 30 to 692 (QIRYSVPEET…DPNDSSLTLY (663 aa)) are extracellular. The N-linked (GlcNAc...) asparagine glycan is linked to asparagine 47. 3 N-linked (GlcNAc...) asparagine glycosylation sites follow: asparagine 414, asparagine 419, and asparagine 545. N-linked (GlcNAc...) asparagine glycosylation is present at asparagine 685. Residues 693-713 (LVVAVAAISCVFLAFVAVLLG) form a helical membrane-spanning segment. Residues 714-932 (LRLRRWHKSH…KKKSGKKEKK (219 aa)) lie on the Cytoplasmic side of the membrane. 2 disordered regions span residues 804–841 (ADHG…WPNN) and 902–932 (ATLT…KEKK). The span at 810–841 (APPNTDWRFSQAQRPGTSGSQNGDDTGTWPNN) shows a compositional bias: polar residues. Positions 922–932 (NKKKSGKKEKK) are enriched in basic residues.

The protein resides in the cell membrane. Functionally, potential calcium-dependent cell-adhesion protein. May be involved in the establishment and maintenance of specific neuronal connections in the brain. The chain is Protocadherin gamma-A8 (PCDHGA8) from Pan troglodytes (Chimpanzee).